Reading from the N-terminus, the 293-residue chain is 4-hydroxy-tetrahydrodipicolinate synthase (293 aa).

Thr46 provides a ligand contact to pyruvate. Tyr134 (proton donor/acceptor) is an active-site residue. Catalysis depends on Lys162, which acts as the Schiff-base intermediate with substrate. Ile204 serves as a coordination point for pyruvate.

Belongs to the DapA family. Homotetramer; dimer of dimers.

It is found in the cytoplasm. The catalysed reaction is L-aspartate 4-semialdehyde + pyruvate = (2S,4S)-4-hydroxy-2,3,4,5-tetrahydrodipicolinate + H2O + H(+). The protein operates within amino-acid biosynthesis; L-lysine biosynthesis via DAP pathway; (S)-tetrahydrodipicolinate from L-aspartate: step 3/4. Catalyzes the condensation of (S)-aspartate-beta-semialdehyde [(S)-ASA] and pyruvate to 4-hydroxy-tetrahydrodipicolinate (HTPA). This Bdellovibrio bacteriovorus (strain ATCC 15356 / DSM 50701 / NCIMB 9529 / HD100) protein is 4-hydroxy-tetrahydrodipicolinate synthase.